A 339-amino-acid chain; its full sequence is D-erythrose-4-phosphate dehydrogenase (339 aa).

NAD(+) contacts are provided by residues 12–13 and arginine 81; that span reads RI. Residues 154–156, arginine 200, 213–214, and arginine 236 contribute to the substrate site; these read SCT and TR. Residue cysteine 155 is the Nucleophile of the active site. Asparagine 318 is a binding site for NAD(+).

Belongs to the glyceraldehyde-3-phosphate dehydrogenase family. Epd subfamily. Homotetramer.

It localises to the cytoplasm. It carries out the reaction D-erythrose 4-phosphate + NAD(+) + H2O = 4-phospho-D-erythronate + NADH + 2 H(+). Its pathway is cofactor biosynthesis; pyridoxine 5'-phosphate biosynthesis; pyridoxine 5'-phosphate from D-erythrose 4-phosphate: step 1/5. Functionally, catalyzes the NAD-dependent conversion of D-erythrose 4-phosphate to 4-phosphoerythronate. This Cronobacter sakazakii (strain ATCC BAA-894) (Enterobacter sakazakii) protein is D-erythrose-4-phosphate dehydrogenase.